Reading from the N-terminus, the 1080-residue chain is Presequence protease 1, chloroplastic/mitochondrial (1080 aa).

The transit peptide at 1–85 (MLRTVSCLAS…GQFSRLSVRA (85 aa)) directs the protein to the chloroplast and mitochondrion. N-acetylvaline is present on Val-86. Residue His-162 participates in Zn(2+) binding. The Proton acceptor role is filled by Glu-165. Position 166 (His-166) interacts with Zn(2+). The active site involves Glu-240. Zn(2+) is bound at residue Glu-262. Residues 571–612 (EKATQEEVEEKNILEKVKAAMTEEDLAELARATEELKLKQET) are a coiled coil. Arg-705 lines the Mg(2+) pocket.

The protein belongs to the peptidase M16 family. PreP subfamily. As to quaternary structure, homodimer. It depends on Zn(2+) as a cofactor. Mg(2+) serves as cofactor. In terms of tissue distribution, expressed only in siliques and flowers.

Its subcellular location is the plastid. It is found in the chloroplast stroma. The protein localises to the mitochondrion matrix. Its activity is regulated as follows. Inactive in the absence of MgCl(2) and CaCl(2) and full activation at 10 mM concentrations of either ion. Completely inhibited by the metal chelator orthophenanthroline, but not affected by phenylmethylsulfonyl fluoride (PMSF) or N-ethylmaleimide (NEM). Functionally, ATP-independent protease that degrades both mitochondrial and chloroplastic transit peptides after their cleavage. Also degrades other unstructured peptides. Specific for peptides in the range of 10 to 65 residues. Shows a preference for cleavage after small polar residues and before basic residues, with a bias for positively charged amino acid residues. This Arabidopsis thaliana (Mouse-ear cress) protein is Presequence protease 1, chloroplastic/mitochondrial (PREP1).